Consider the following 914-residue polypeptide: Sensor protein TorS (914 aa).

Residues 1–8 lie on the Cytoplasmic side of the membrane; that stretch reads MNLTLTRR. Residues 9–29 traverse the membrane as a helical segment; it reads LWMGFALMALLTLTSTLVGWY. At 30 to 332 the chain is on the periplasmic side; that stretch reads NLRFISQVEK…EKASARGQYS (303 aa). Residues 333-353 form a helical membrane-spanning segment; the sequence is LLLLGMVSLCALILILWRVVY. The HAMP domain maps to 354–407; sequence RSVTRPLAEQTQALQRLLDGDIDSPFPETAGVRELDTIGRLMDAFRSNVHALNR. Residues 354 to 914 lie on the Cytoplasmic side of the membrane; the sequence is RSVTRPLAEQ…WLHKKDLNAI (561 aa). The Histidine kinase domain occupies 450–664; sequence AMSHEIRTPL…CFCLRLPLRV (215 aa). Position 453 is a phosphohistidine; by autocatalysis (His-453). One can recognise a Response regulatory domain in the interval 683–798; that stretch reads RLLLIEDNPL…VLGQLLAHYL (116 aa). Asp-733 bears the 4-aspartylphosphate mark. The 94-residue stretch at 821 to 914 folds into the HPt domain; sequence GTEKIHEWLV…WLHKKDLNAI (94 aa). The residue at position 860 (His-860) is a Phosphohistidine.

As to quaternary structure, may form homomultimers. Seems to interact with TorT and TorC apocytochrome. In terms of processing, activation requires a sequential transfer of a phosphate group from a His in the primary transmitter domain, to an Asp in the receiver domain and to a His in the secondary transmitter domain.

The protein localises to the cell inner membrane. The catalysed reaction is ATP + protein L-histidine = ADP + protein N-phospho-L-histidine.. Inhibited by TorC apocytochrome. Functionally, member of the two-component regulatory system TorS/TorR involved in the anaerobic utilization of trimethylamine-N-oxide (TMAO). Detects the presence of TMAO in the medium and, in response, activates TorR via a four-step phosphorelay. When TMAO is removed, TorS can dephosphorylate TorR, probably by a reverse phosphorelay involving His-860 and Asp-733. The protein is Sensor protein TorS (torS) of Escherichia coli (strain K12).